A 1168-amino-acid polypeptide reads, in one-letter code: Probable serine/threonine protein kinase IRE (1168 aa).

Disordered stretches follow at residues 1–165 (MSTT…GVES) and 377–444 (EKQN…KIQP). The segment covering 16–25 (PTTISTPTST) has biased composition (low complexity). Basic and acidic residues-rich tracts occupy residues 39-54 (RHSD…KTDE) and 107-130 (QDDK…DARA). 2 stretches are compositionally biased toward polar residues: residues 146-163 (QWSQ…NPGV) and 401-414 (TARS…NFRM). The C2H2-type; atypical zinc finger occupies 488 to 507 (CRICEVEIPVVHVEEHSRIC). 3 disordered regions span residues 546 to 566 (PRAV…DLDE), 602 to 622 (GTKD…PRNS), and 717 to 744 (SSNA…LNPR). In terms of domain architecture, Protein kinase spans 754 to 1043 (FEIIKPISRG…AGEVKQHHFF (290 aa)). ATP-binding positions include 760–768 (ISRGAFGRV) and Lys783. Asp877 acts as the Proton acceptor in catalysis. In terms of domain architecture, AGC-kinase C-terminal spans 1044–1144 (KDINWDTLAR…KNLSQLASIN (101 aa)).

It belongs to the protein kinase superfamily. AGC Ser/Thr protein kinase family. In terms of tissue distribution, highly expressed in roots, elongating root hair cells and pollen grains.

The catalysed reaction is L-seryl-[protein] + ATP = O-phospho-L-seryl-[protein] + ADP + H(+). The enzyme catalyses L-threonyl-[protein] + ATP = O-phospho-L-threonyl-[protein] + ADP + H(+). Functionally, modulates root tip growth. May play a common role in the tip growth of plant cells. The chain is Probable serine/threonine protein kinase IRE from Arabidopsis thaliana (Mouse-ear cress).